The following is a 513-amino-acid chain: MVNNLHSAHPTGAEYLKAVLSSKVYDVAQVTPLQDMAKLSERLGNKVFIKREDRQPVHSFKLRGAYAMIAGLSAEQKASGVIAASAGNHAQGVALSAKHLGLRALIVMPQNTPSIKVDAVRGFGGEVLLHGANFDEAKAKAIELAESKNMTFIPPFDHPAVIAGQGSIAMELLQQNSQIDRIFVPVGGGGLAAGIAVLIKQLMPEIKVIGVESKDSACLYRALKAGKPIDLDRVGLFADGVAVKRIGDETFRVCQQYIDDVVLVDGDEICAAVKDIFENVRAIAEPSGALSLAGLKKYVKEHNIQGETLVNVLSGANLNFHTLRYVSERCEIGEQHEALLAVTIPEQPGSFLKFCHILGHVPVTEFKYRYADDKQACIFVGVRITGQEEKQTIINQLQQNGYDLIDLSNDDIAKTHVRYMIGGRSNSPLKERLYSFEFPEQKGALLKFLETLGQTHWNISVFHYRAHGADYGNVLAGFQLNDEDLDAFNQHLEKLGYVYQDVTESPAYRYFLV.

At lysine 61 the chain carries N6-(pyridoxal phosphate)lysine. Pyridoxal 5'-phosphate is bound by residues asparagine 88, 187 to 191 (GGGGL), and serine 314. 2 ACT-like domains span residues 338–409 (ALLA…DLSN) and 432–504 (RLYS…DVTE).

The protein belongs to the serine/threonine dehydratase family. As to quaternary structure, homotetramer. Pyridoxal 5'-phosphate is required as a cofactor.

It catalyses the reaction L-threonine = 2-oxobutanoate + NH4(+). It functions in the pathway amino-acid biosynthesis; L-isoleucine biosynthesis; 2-oxobutanoate from L-threonine: step 1/1. Its function is as follows. Catalyzes the anaerobic formation of alpha-ketobutyrate and ammonia from threonine in a two-step reaction. The first step involved a dehydration of threonine and a production of enamine intermediates (aminocrotonate), which tautomerizes to its imine form (iminobutyrate). Both intermediates are unstable and short-lived. The second step is the nonenzymatic hydrolysis of the enamine/imine intermediates to form 2-ketobutyrate and free ammonia. In the low water environment of the cell, the second step is accelerated by RidA. The polypeptide is L-threonine dehydratase biosynthetic IlvA (ilvA) (Pasteurella multocida (strain Pm70)).